The sequence spans 308 residues: uncharacterized protein (308 aa).

This is an uncharacterized protein from Treponema pallidum (strain Nichols).